The chain runs to 574 residues: Pre-mRNA-processing protein 45 (574 aa).

5 disordered regions span residues 1–46 (MAAL…WKPK), 203–234 (PPRFKHKKIPRGPAEPPPPVLQSPPRAATAQD), 350–406 (ETGI…SEMR), 478–503 (AGSSRNDESFGGGTEEGIKEEMSKDR), and 549–574 (MDAARRGGKRTAEDRDEERRKRARDE). Pro residues-rich tracts occupy residues 24-33 (APLPTTPGPQ) and 215-224 (PAEPPPPVLQ). The segment covering 363 to 377 (GSEEESDEEEEDEEA) has biased composition (acidic residues). 3 stretches are compositionally biased toward basic and acidic residues: residues 378-397 (IRERNIVREEKRREREKEMR), 493-503 (EGIKEEMSKDR), and 558-574 (RTAEDRDEERRKRARDE).

Belongs to the SNW family. In terms of assembly, associated with the spliceosome.

It is found in the nucleus. Functionally, involved in pre-mRNA splicing. The sequence is that of Pre-mRNA-processing protein 45 (PRP45) from Cryptococcus neoformans var. neoformans serotype D (strain JEC21 / ATCC MYA-565) (Filobasidiella neoformans).